The following is a 236-amino-acid chain: Translocon-associated protein subunit alpha (236 aa).

Positions 1–20 are cleaved as a signal peptide; it reads MNKLITLLLAVLMIISCVYS. The Lumenal segment spans residues 21-163; the sequence is DDVEITDDEV…TEKETSFDMD (143 aa). Residues asparagine 74, asparagine 94, asparagine 141, asparagine 148, and asparagine 152 are each glycosylated (N-linked (GlcNAc...) asparagine). A helical transmembrane segment spans residues 164–184; sequence SFFLILLGLGFVGGIGYIVYG. Over 185–236 the chain is Cytoplasmic; it reads KMPKQKKVRTVSKVNKNAVRVETEDETAEWLSGTSAASSKVKSVQKVVKKNK.

Belongs to the TRAP-alpha family. Heterotrimer of TRAP-alpha, TRAP-beta and TRAP-gamma. In terms of processing, phosphorylated in its cytoplasmic tail.

It localises to the endoplasmic reticulum membrane. Its function is as follows. TRAP proteins are part of a complex whose function is to bind calcium to the ER membrane and thereby regulate the retention of ER resident proteins. In Dictyostelium discoideum (Social amoeba), this protein is Translocon-associated protein subunit alpha (ssr1).